The primary structure comprises 284 residues: 2,3,4,5-tetrahydropyridine-2,6-dicarboxylate N-succinyltransferase (284 aa).

Residues Arg-111 and Asp-148 each contribute to the substrate site.

Belongs to the transferase hexapeptide repeat family. Homotrimer.

Its subcellular location is the cytoplasm. It catalyses the reaction (S)-2,3,4,5-tetrahydrodipicolinate + succinyl-CoA + H2O = (S)-2-succinylamino-6-oxoheptanedioate + CoA. The protein operates within amino-acid biosynthesis; L-lysine biosynthesis via DAP pathway; LL-2,6-diaminopimelate from (S)-tetrahydrodipicolinate (succinylase route): step 1/3. The chain is 2,3,4,5-tetrahydropyridine-2,6-dicarboxylate N-succinyltransferase from Brucella melitensis biotype 2 (strain ATCC 23457).